Consider the following 266-residue polypeptide: Undecaprenyl-diphosphatase (266 aa).

8 helical membrane passes run 1-21 (MTLLQAIILGIVQGLTEFLPV), 40-60 (LPLYVDIATNTGTFFAVLVVL), 90-110 (LLVVLGSIPTAMIGLGLKPIF), 113-133 (LNQPLYVSFALIVTGLVLWFT), 145-165 (LSWLDATIGGIAQGCAVIPGI), 188-208 (FSFLMYLVVSFGVAILGIDEV), 217-237 (PLLGMIIASFVTGYIALLWLF), and 245-265 (FKWFAPYLWVVAAITLIKVAM).

Belongs to the UppP family.

The protein localises to the cell inner membrane. It catalyses the reaction di-trans,octa-cis-undecaprenyl diphosphate + H2O = di-trans,octa-cis-undecaprenyl phosphate + phosphate + H(+). Catalyzes the dephosphorylation of undecaprenyl diphosphate (UPP). Confers resistance to bacitracin. This chain is Undecaprenyl-diphosphatase, found in Acaryochloris marina (strain MBIC 11017).